A 386-amino-acid polypeptide reads, in one-letter code: Putative 8-amino-7-oxononanoate synthase (386 aa).

Arg22 is a substrate binding site. 109-110 contributes to the pyridoxal 5'-phosphate binding site; it reads GY. Residue His134 coordinates substrate. Pyridoxal 5'-phosphate contacts are provided by residues Ser182, 207–210, and 238–241; these read DEAH and TLSK. Lys241 carries the post-translational modification N6-(pyridoxal phosphate)lysine. Thr356 is a binding site for substrate.

This sequence belongs to the class-II pyridoxal-phosphate-dependent aminotransferase family. BioF subfamily. As to quaternary structure, homodimer. The cofactor is pyridoxal 5'-phosphate.

It catalyses the reaction 6-carboxyhexanoyl-[ACP] + L-alanine + H(+) = (8S)-8-amino-7-oxononanoate + holo-[ACP] + CO2. It participates in cofactor biosynthesis; biotin biosynthesis. Functionally, catalyzes the decarboxylative condensation of pimeloyl-[acyl-carrier protein] and L-alanine to produce 8-amino-7-oxononanoate (AON), [acyl-carrier protein], and carbon dioxide. The chain is Putative 8-amino-7-oxononanoate synthase (bioF) from Nostoc sp. (strain PCC 7120 / SAG 25.82 / UTEX 2576).